The primary structure comprises 361 residues: Spermidine/putrescine import ATP-binding protein PotA (361 aa).

The ABC transporter domain maps to 4–234 (LELRDVTRRF…PANRFIADFI (231 aa)). 36–43 (GPSGCGKT) provides a ligand contact to ATP.

Belongs to the ABC transporter superfamily. Spermidine/putrescine importer (TC 3.A.1.11.1) family. The complex is composed of two ATP-binding proteins (PotA), two transmembrane proteins (PotB and PotC) and a solute-binding protein (PotD).

The protein resides in the cell inner membrane. It carries out the reaction ATP + H2O + polyamine-[polyamine-binding protein]Side 1 = ADP + phosphate + polyamineSide 2 + [polyamine-binding protein]Side 1.. In terms of biological role, part of the ABC transporter complex PotABCD involved in spermidine/putrescine import. Responsible for energy coupling to the transport system. In Nitrosomonas europaea (strain ATCC 19718 / CIP 103999 / KCTC 2705 / NBRC 14298), this protein is Spermidine/putrescine import ATP-binding protein PotA.